Reading from the N-terminus, the 208-residue chain is Flavin-dependent thymidylate synthase (208 aa).

Positions 1 to 208 constitute a ThyX domain; sequence MEVICKHYTP…QYLFEDCLKH (208 aa). Residues S50 and 74 to 76 each bind FAD; that span reads RHR. Residues 71 to 74, 84 to 86, and K147 each bind dUMP; these read ELSR and SSR. The ThyX motif signature appears at 74–84; that stretch reads RHRIASLSVKS. FAD is bound by residues 163–165 and N169; that span reads NAR. R174 contributes to the dUMP binding site. The active-site Involved in ionization of N3 of dUMP, leading to its activation is the R174.

It belongs to the thymidylate synthase ThyX family. Homotetramer. FAD is required as a cofactor.

It catalyses the reaction dUMP + (6R)-5,10-methylene-5,6,7,8-tetrahydrofolate + NADPH + H(+) = dTMP + (6S)-5,6,7,8-tetrahydrofolate + NADP(+). Its pathway is pyrimidine metabolism; dTTP biosynthesis. Catalyzes the reductive methylation of 2'-deoxyuridine-5'-monophosphate (dUMP) to 2'-deoxythymidine-5'-monophosphate (dTMP) while utilizing 5,10-methylenetetrahydrofolate (mTHF) as the methyl donor, and NAD(P)H and FADH(2) as the reductant. The polypeptide is Flavin-dependent thymidylate synthase (Helicobacter pylori (strain ATCC 700392 / 26695) (Campylobacter pylori)).